Reading from the N-terminus, the 421-residue chain is Testin (421 aa).

Residues 92-199 (MILTNPVAAK…GDVKLPRDMN (108 aa)) form the PET domain. Disordered stretches follow at residues 133 to 164 (EKQPVAGSEGAQYRKKQLAKQLPAHDQDPSKC) and 193 to 213 (KLPRDMNTQGPNKMYIPGGDR). The span at 155–164 (PAHDQDPSKC) shows a compositional bias: basic and acidic residues. 3 LIM zinc-binding domains span residues 234 to 297 (YSCY…CDSE), 299 to 359 (PRCA…NHAV), and 362 to 421 (QGCH…KMMS).

The protein belongs to the prickle / espinas / testin family. In terms of assembly, interacts via LIM domain 1 with ZYX. Interacts (via LIM domain 3) with ENAH and VASP. Interacts with ALKBH4, talin, actin, alpha-actinin, GRIP1 and PXN. Interacts (via LIM domain 2) with ACTL7A (via N-terminus). Heterodimer with ACTL7A; the heterodimer interacts with ENAH to form a heterotrimer.

The protein resides in the cytoplasm. The protein localises to the cell junction. Its subcellular location is the focal adhesion. In terms of biological role, scaffold protein that may play a role in cell adhesion, cell spreading and in the reorganization of the actin cytoskeleton. Plays a role in the regulation of cell proliferation. May act as a tumor suppressor. This chain is Testin (TES), found in Ovis aries (Sheep).